Here is a 368-residue protein sequence, read N- to C-terminus: Protein RecA (368 aa).

80–87 (GPESSGKT) contacts ATP. Polar residues predominate over residues 344-353 (NPTFTATPDS). A disordered region spans residues 344 to 368 (NPTFTATPDSENADNADDEFSEEEL). Residues 354-368 (ENADNADDEFSEEEL) show a composition bias toward acidic residues.

It belongs to the RecA family.

The protein resides in the cytoplasm. Functionally, can catalyze the hydrolysis of ATP in the presence of single-stranded DNA, the ATP-dependent uptake of single-stranded DNA by duplex DNA, and the ATP-dependent hybridization of homologous single-stranded DNAs. It interacts with LexA causing its activation and leading to its autocatalytic cleavage. The chain is Protein RecA from Mannheimia haemolytica (Pasteurella haemolytica).